We begin with the raw amino-acid sequence, 344 residues long: Uroporphyrinogen decarboxylase (344 aa).

Substrate-binding positions include Arg-26 to Arg-30, Phe-45, Asp-75, Tyr-151, Ser-206, and His-320.

It belongs to the uroporphyrinogen decarboxylase family. Homodimer.

It localises to the cytoplasm. It catalyses the reaction uroporphyrinogen III + 4 H(+) = coproporphyrinogen III + 4 CO2. Its pathway is porphyrin-containing compound metabolism; protoporphyrin-IX biosynthesis; coproporphyrinogen-III from 5-aminolevulinate: step 4/4. Its function is as follows. Catalyzes the decarboxylation of four acetate groups of uroporphyrinogen-III to yield coproporphyrinogen-III. This Staphylococcus haemolyticus (strain JCSC1435) protein is Uroporphyrinogen decarboxylase.